Consider the following 152-residue polypeptide: Transcriptional repressor NrdR (152 aa).

Residues 3-34 (CAFCGNPDTQVIDSRVSEDGSSIRRRRRCPAC) fold into a zinc finger. The ATP-cone domain occupies 49-139 (PQVVKTAGHR…VYRSFQDISE (91 aa)).

It belongs to the NrdR family. Requires Zn(2+) as cofactor.

Negatively regulates transcription of bacterial ribonucleotide reductase nrd genes and operons by binding to NrdR-boxes. This Chromobacterium violaceum (strain ATCC 12472 / DSM 30191 / JCM 1249 / CCUG 213 / NBRC 12614 / NCIMB 9131 / NCTC 9757 / MK) protein is Transcriptional repressor NrdR.